We begin with the raw amino-acid sequence, 126 residues long: Large ribosomal subunit protein bL20 (126 aa).

Belongs to the bacterial ribosomal protein bL20 family.

Binds directly to 23S ribosomal RNA and is necessary for the in vitro assembly process of the 50S ribosomal subunit. It is not involved in the protein synthesizing functions of that subunit. The sequence is that of Large ribosomal subunit protein bL20 from Acholeplasma laidlawii (strain PG-8A).